The following is a 661-amino-acid chain: UvrABC system protein B (661 aa).

In terms of domain architecture, Helicase ATP-binding spans 28-414 (KGVKEGKRHQ…HTDEMIEQII (387 aa)). Residue 41-48 (GATGTGKT) coordinates ATP. The short motif at 94–117 (YYDYYQPEAYVPSTDTFIEKDASI) is the Beta-hairpin element. In terms of domain architecture, Helicase C-terminal spans 432–598 (QIDDLLSEIQ…TINKKIHDVI (167 aa)). The segment at 604–625 (NDETNEKQQTELPKKMTKKERQ) is disordered. The segment covering 607 to 617 (TNEKQQTELPK) has biased composition (basic and acidic residues). Residues 625–660 (QKTIENIEKEMKKAAKDLDFEKATELRDMLFELKSE) enclose the UVR domain.

Belongs to the UvrB family. In terms of assembly, forms a heterotetramer with UvrA during the search for lesions. Interacts with UvrC in an incision complex.

The protein resides in the cytoplasm. Its function is as follows. The UvrABC repair system catalyzes the recognition and processing of DNA lesions. A damage recognition complex composed of 2 UvrA and 2 UvrB subunits scans DNA for abnormalities. Upon binding of the UvrA(2)B(2) complex to a putative damaged site, the DNA wraps around one UvrB monomer. DNA wrap is dependent on ATP binding by UvrB and probably causes local melting of the DNA helix, facilitating insertion of UvrB beta-hairpin between the DNA strands. Then UvrB probes one DNA strand for the presence of a lesion. If a lesion is found the UvrA subunits dissociate and the UvrB-DNA preincision complex is formed. This complex is subsequently bound by UvrC and the second UvrB is released. If no lesion is found, the DNA wraps around the other UvrB subunit that will check the other stand for damage. The polypeptide is UvrABC system protein B (Staphylococcus haemolyticus (strain JCSC1435)).